Consider the following 374-residue polypeptide: Chaperone protein DnaJ (374 aa).

The 65-residue stretch at aspartate 5 to glycine 69 folds into the J domain. The CR-type zinc-finger motif lies at glycine 141–arginine 223. Zn(2+) is bound by residues cysteine 154, cysteine 157, cysteine 171, cysteine 174, cysteine 197, cysteine 200, cysteine 211, and cysteine 214. CXXCXGXG motif repeat units follow at residues cysteine 154–glycine 161, cysteine 171–glycine 178, cysteine 197–glycine 204, and cysteine 211–glycine 218.

It belongs to the DnaJ family. Homodimer. Zn(2+) is required as a cofactor.

Its subcellular location is the cytoplasm. Its function is as follows. Participates actively in the response to hyperosmotic and heat shock by preventing the aggregation of stress-denatured proteins and by disaggregating proteins, also in an autonomous, DnaK-independent fashion. Unfolded proteins bind initially to DnaJ; upon interaction with the DnaJ-bound protein, DnaK hydrolyzes its bound ATP, resulting in the formation of a stable complex. GrpE releases ADP from DnaK; ATP binding to DnaK triggers the release of the substrate protein, thus completing the reaction cycle. Several rounds of ATP-dependent interactions between DnaJ, DnaK and GrpE are required for fully efficient folding. Also involved, together with DnaK and GrpE, in the DNA replication of plasmids through activation of initiation proteins. The chain is Chaperone protein DnaJ from Mesoplasma florum (strain ATCC 33453 / NBRC 100688 / NCTC 11704 / L1) (Acholeplasma florum).